A 1063-amino-acid chain; its full sequence is Retinoblastoma-like protein 1 (1063 aa).

Phosphothreonine is present on residues Thr-332, Thr-369, and Thr-385. Residues Val-383–Arg-584 form a domain A region. The segment at Val-383–Tyr-944 is pocket; binds T and E1A. Residues Val-585 to Ser-779 are spacer. Phosphoserine is present on residues Ser-640, Ser-650, Ser-748, and Ser-761. The tract at residues Lys-780 to Tyr-944 is domain B. Phosphoserine occurs at positions 959, 970, and 983. The residue at position 992 (Thr-992) is a Phosphothreonine. Phosphoserine occurs at positions 1004 and 1036.

It belongs to the retinoblastoma protein (RB) family. As to quaternary structure, component of the DREAM complex (also named LINC complex) at least composed of E2F4, E2F5, LIN9, LIN37, LIN52, LIN54, MYBL1, MYBL2, RBL1, RBL2, RBBP4, TFDP1 and TFDP2. The complex exists in quiescent cells where it represses cell cycle-dependent genes. It dissociates in S phase when LIN9, LIN37, LIN52 and LIN54 form a subcomplex that binds to MYBL2. Interacts with AATF. Interacts with KDM5A. Interacts with KMT5B and KMT5C. Interacts with USP4. Interacts with RBBP9. Cell-cycle arrest properties are inactivated by phosphorylation on Thr-332, Ser-640, Ser-959 and Ser-970 by CDK4. In terms of tissue distribution, highly expressed in fetal heart and liver. Expressed at low levels in all other fetal tissues except skeletal muscle. High levels in neonatal spleen and thymus with low levels in other tissues. In adult, highly expressed in testis. Barely detectable in other tissues.

Its subcellular location is the nucleus. Its function is as follows. Key regulator of entry into cell division. Directly involved in heterochromatin formation by maintaining overall chromatin structure and, in particular, that of constitutive heterochromatin by stabilizing histone methylation. Recruits and targets histone methyltransferases KMT5B and KMT5C, leading to epigenetic transcriptional repression. Controls histone H4 'Lys-20' trimethylation. Probably acts as a transcription repressor by recruiting chromatin-modifying enzymes to promoters. Potent inhibitor of E2F-mediated trans-activation. May act as a tumor suppressor. In Mus musculus (Mouse), this protein is Retinoblastoma-like protein 1 (Rbl1).